The sequence spans 186 residues: Allergen Fel d 4 (186 aa).

A signal peptide spans 1-15; it reads MKLLLLCLGLILVCA. N-linked (GlcNAc...) asparagine glycosylation is found at Asn-51 and Asn-66. Cysteines 81 and 171 form a disulfide.

It belongs to the calycin superfamily. Lipocalin family. In terms of tissue distribution, abundant in urine (at protein level).

It is found in the secreted. May be a pheromone carrier. Acts as a kairomone, detected by the prey vomeronasal organ and inducing fear reactions in mice. The protein is Allergen Fel d 4 of Felis catus (Cat).